The following is a 451-amino-acid chain: Coproporphyrinogen III oxidase (451 aa).

FAD contacts are provided by residues 10–15 (GGGISG), 36–37 (DP), 58–61 (GAEA), valine 242, tryptophan 393, and 429–431 (IGV).

Belongs to the protoporphyrinogen/coproporphyrinogen oxidase family. Coproporphyrinogen III oxidase subfamily. FAD is required as a cofactor.

It localises to the cytoplasm. It catalyses the reaction coproporphyrinogen III + 3 O2 = coproporphyrin III + 3 H2O2. It participates in porphyrin-containing compound metabolism; protoheme biosynthesis. In terms of biological role, involved in coproporphyrin-dependent heme b biosynthesis. Catalyzes the oxidation of coproporphyrinogen III to coproporphyrin III. This chain is Coproporphyrinogen III oxidase, found in Mycobacterium leprae (strain TN).